Reading from the N-terminus, the 123-residue chain is Large ribosomal subunit protein bL12 (123 aa).

It belongs to the bacterial ribosomal protein bL12 family. As to quaternary structure, homodimer. Part of the ribosomal stalk of the 50S ribosomal subunit. Forms a multimeric L10(L12)X complex, where L10 forms an elongated spine to which 2 to 4 L12 dimers bind in a sequential fashion. Binds GTP-bound translation factors.

Forms part of the ribosomal stalk which helps the ribosome interact with GTP-bound translation factors. Is thus essential for accurate translation. The chain is Large ribosomal subunit protein bL12 from Roseobacter denitrificans (strain ATCC 33942 / OCh 114) (Erythrobacter sp. (strain OCh 114)).